Reading from the N-terminus, the 184-residue chain is Alpha-tubulin N-acetyltransferase (184 aa).

The region spanning 1–174 (MDTHGEKMKN…NNFVIFAEYF (174 aa)) is the N-acetyltransferase domain. Acetyl-CoA contacts are provided by residues 108-121 (FYIR…GLGL) and 144-153 (SHKLRSFLKK).

The protein belongs to the acetyltransferase ATAT1 family.

It catalyses the reaction L-lysyl-[alpha-tubulin] + acetyl-CoA = N(6)-acetyl-L-lysyl-[alpha-tubulin] + CoA + H(+). In terms of biological role, specifically acetylates 'Lys-40' in alpha-tubulin on the lumenal side of microtubules. Promotes microtubule destabilization and accelerates microtubule dynamics; this activity may be independent of acetylation activity. Acetylates alpha-tubulin with a slow enzymatic rate, due to a catalytic site that is not optimized for acetyl transfer. Enters the microtubule through each end and diffuses quickly throughout the lumen of microtubules. Acetylates only long/old microtubules because of its slow acetylation rate since it does not have time to act on dynamically unstable microtubules before the enzyme is released. The sequence is that of Alpha-tubulin N-acetyltransferase from Plasmodium vivax (strain Salvador I).